The sequence spans 235 residues: Protein YIP4 (235 aa).

5 consecutive transmembrane segments (helical) span residues 89–109, 114–134, 145–165, 186–206, and 215–235; these read ISAN…SLFV, SLFS…ALHL, LISY…NALV, VLSL…VAAV, and IIEI…STIL.

Belongs to the YIP1 family. Interacts with TVP18, TVP23, YIP1 and YIP5. Interacts with SEC4, YPT1, YPT6, YPT7, YPT10, YPT11, YPT31, YPT32 and YPT52; These proteins are all Rab GTPases.

The protein localises to the golgi apparatus membrane. In terms of biological role, may be involved in proper membrane localization of Rab GTPases. In Saccharomyces cerevisiae (strain ATCC 204508 / S288c) (Baker's yeast), this protein is Protein YIP4 (YIP4).